Consider the following 374-residue polypeptide: DNA replication and repair protein RecF (374 aa).

30 to 37 (GENAQGKT) is a binding site for ATP.

It belongs to the RecF family.

The protein localises to the cytoplasm. Its function is as follows. The RecF protein is involved in DNA metabolism; it is required for DNA replication and normal SOS inducibility. RecF binds preferentially to single-stranded, linear DNA. It also seems to bind ATP. The chain is DNA replication and repair protein RecF from Lactiplantibacillus plantarum (strain ATCC BAA-793 / NCIMB 8826 / WCFS1) (Lactobacillus plantarum).